Here is an 85-residue protein sequence, read N- to C-terminus: uncharacterized protein (85 aa).

Residues 35-85 form a disordered region; the sequence is SDKDAPFSTQALTRSKSKRKRSALPVANGLKKPTRSIKRPSRGERLSATTI.

This is an uncharacterized protein from Pasteurella multocida (strain Pm70).